The following is a 379-amino-acid chain: Anthranilate O-methyltransferase 3 (379 aa).

The segment covering 1–10 (MPMRIERDLH) has biased composition (basic and acidic residues). Residues 1-21 (MPMRIERDLHMATGNGETSYT) form a disordered region. Tyrosine 20 contacts S-adenosyl-L-homocysteine. Glutamine 27 contributes to the anthranilate binding site. Positions 61, 66, 100, 101, 143, and 144 each coordinate S-adenosyl-L-homocysteine. Residues histidine 164 and tryptophan 165 each contribute to the anthranilate site. Glutamate 265 and phenylalanine 267 together coordinate Mg(2+).

This sequence belongs to the methyltransferase superfamily. Type-7 methyltransferase family. SABATH subfamily.

The catalysed reaction is anthranilate + S-adenosyl-L-methionine = O-methyl anthranilate + S-adenosyl-L-homocysteine. It carries out the reaction benzoate + S-adenosyl-L-methionine = methyl benzoate + S-adenosyl-L-homocysteine. The enzyme catalyses salicylate + S-adenosyl-L-methionine = methyl salicylate + S-adenosyl-L-homocysteine. In terms of biological role, methyltransferase involved in the biosynthesis of methyl anthranilate in response to stresses. Utilizes anthranilic acid as substrate. Produces exclusively the O-methyl ester. Can also use benzoic acid as substrate. Low activity with salicylic acid. This Zea mays (Maize) protein is Anthranilate O-methyltransferase 3 (AAMT3).